The sequence spans 146 residues: Large ribosomal subunit protein uL15 (146 aa).

Residues 1–13 (MKLHELHSAEGSR) show a composition bias toward basic and acidic residues. The interval 1–55 (MKLHELHSAEGSRRNRKRVGRGTSSGYGKTSGRGQKGQLARQGGHTRLGFEGGQM) is disordered. The span at 23-35 (TSSGYGKTSGRGQ) shows a compositional bias: gly residues.

It belongs to the universal ribosomal protein uL15 family. In terms of assembly, part of the 50S ribosomal subunit.

Functionally, binds to the 23S rRNA. This is Large ribosomal subunit protein uL15 from Lactobacillus acidophilus (strain ATCC 700396 / NCK56 / N2 / NCFM).